The chain runs to 1003 residues: Serine/threonine-protein kinase spk-1 (1003 aa).

3 disordered regions span residues 92–112 (NSTN…TQNE), 169–309 (NEND…SATS), and 337–408 (RPSI…KRGG). The segment covering 202-211 (SDEEDVESQD) has biased composition (acidic residues). Positions 248–265 (SNDDKNEKDVLVDEDTSK) are enriched in basic and acidic residues. The span at 285-300 (TIDSSVSSSTSSSSTG) shows a compositional bias: low complexity. Residues 346-359 (KKTEVNANEERLDD) are compositionally biased toward basic and acidic residues. The Protein kinase domain occupies 422 to 904 (YHVIRKLGWG…AKIALKHPFL (483 aa)). ATP contacts are provided by residues 428 to 436 (LGWGHFSTV) and Lys-451. Asp-555 acts as the Proton acceptor in catalysis. Residues 927 to 1003 (DGLIPEPFDG…DIERFQLDLQ (77 aa)) are disordered. A compositionally biased stretch (basic and acidic residues) spans 936 to 953 (GNEHQEVYRDENDSRSAS). The segment covering 954–964 (ERSANSRSAGG) has biased composition (low complexity). Positions 983 to 992 (VITNNETTDI) are enriched in polar residues. The span at 994 to 1003 (DIERFQLDLQ) shows a compositional bias: basic and acidic residues.

The protein belongs to the protein kinase superfamily. Ser/Thr protein kinase family. Interacts with rsp-3. Predominantly coexpressed with rsp-3 in adult hermaphrodite germlines.

It carries out the reaction L-seryl-[protein] + ATP = O-phospho-L-seryl-[protein] + ADP + H(+). The catalysed reaction is L-threonyl-[protein] + ATP = O-phospho-L-threonyl-[protein] + ADP + H(+). Its function is as follows. Required for embryogenesis and germline development in both adult hermaphrodites and males. SR-protein kinase (SRPK) that binds directly to and phosphorylates the RS domain of rsp-3/CeSF2 in vitro. The polypeptide is Serine/threonine-protein kinase spk-1 (spk-1) (Caenorhabditis elegans).